The sequence spans 92 residues: Small ribosomal subunit protein uS19 (92 aa).

Positions 73–92 are disordered; sequence EFSPTRSFRGHAGAKNKGRK. Over residues 80–92 the composition is skewed to basic residues; the sequence is FRGHAGAKNKGRK.

The protein belongs to the universal ribosomal protein uS19 family.

In terms of biological role, protein S19 forms a complex with S13 that binds strongly to the 16S ribosomal RNA. This is Small ribosomal subunit protein uS19 from Christiangramia forsetii (strain DSM 17595 / CGMCC 1.15422 / KT0803) (Gramella forsetii).